The primary structure comprises 3165 residues: Protein eyes shut homolog (3165 aa).

Positions 1 to 21 are cleaved as a signal peptide; the sequence is MTDKSIVILSLMVFHSSFING. Residue asparagine 166 is glycosylated (N-linked (GlcNAc...) asparagine). EGF-like domains are found at residues 170 to 212, 213 to 254, and 256 to 292; these read KQQF…KYCQ, ELDA…KNCS, and IIGQ…PFCE. Disulfide bonds link cysteine 174–cysteine 189, cysteine 183–cysteine 200, cysteine 202–cysteine 211, cysteine 217–cysteine 228, cysteine 222–cysteine 242, cysteine 244–cysteine 253, cysteine 260–cysteine 270, cysteine 265–cysteine 280, and cysteine 282–cysteine 291. N-linked (GlcNAc...) asparagine glycosylation is found at asparagine 269 and asparagine 272. N-linked (GlcNAc...) asparagine glycans are attached at residues asparagine 311 and asparagine 343. 2 consecutive EGF-like domains span residues 332-368 and 370-406; these read DVSE…LLCK and IQTS…KNCE. Cystine bridges form between cysteine 341–cysteine 356, cysteine 358–cysteine 367, cysteine 374–cysteine 385, and cysteine 396–cysteine 405. Residues asparagine 506 and asparagine 566 are each glycosylated (N-linked (GlcNAc...) asparagine). EGF-like domains are found at residues 567 to 602 and 643 to 679; these read TTDD…RLCV and DTED…TQCE. 46 cysteine pairs are disulfide-bonded: cysteine 575–cysteine 590, cysteine 592–cysteine 601, cysteine 669–cysteine 678, cysteine 685–cysteine 696, cysteine 690–cysteine 705, cysteine 707–cysteine 719, cysteine 737–cysteine 748, cysteine 742–cysteine 757, cysteine 759–cysteine 768, cysteine 775–cysteine 786, cysteine 780–cysteine 795, cysteine 797–cysteine 806, cysteine 813–cysteine 824, cysteine 818–cysteine 835, cysteine 837–cysteine 846, cysteine 853–cysteine 866, cysteine 860–cysteine 876, cysteine 878–cysteine 887, cysteine 894–cysteine 905, cysteine 899–cysteine 914, cysteine 916–cysteine 925, cysteine 932–cysteine 943, cysteine 937–cysteine 952, cysteine 954–cysteine 963, cysteine 970–cysteine 981, cysteine 975–cysteine 990, cysteine 992–cysteine 1001, cysteine 1008–cysteine 1019, cysteine 1013–cysteine 1028, cysteine 1030–cysteine 1039, cysteine 1046–cysteine 1056, cysteine 1051–cysteine 1065, cysteine 1067–cysteine 1076, cysteine 1083–cysteine 1094, cysteine 1088–cysteine 1103, cysteine 1105–cysteine 1114, cysteine 1121–cysteine 1137, cysteine 1131–cysteine 1147, cysteine 1149–cysteine 1158, cysteine 1165–cysteine 1176, cysteine 1170–cysteine 1185, cysteine 1187–cysteine 1196, cysteine 2037–cysteine 2063, cysteine 2103–cysteine 2114, cysteine 2108–cysteine 2128, and cysteine 2130–cysteine 2139. The EGF-like 8; calcium-binding domain maps to 681 to 720; it reads DIDECASHPCKNGATCIDQPGNYFCQCVPPFKVVDGFSCL. The region spanning 733–769 is the EGF-like 9; calcium-binding domain; the sequence is DIDDCILNACEHNSTCKDLHLSYQCVCLSDWEGNFCE. The EGF-like 10; calcium-binding domain maps to 771–807; it reads ESNECKMNPCKNNSTCTDLYKSYRCECTSGWTGQNCS. EGF-like domains are found at residues 809 to 847, 849 to 888, and 890 to 926; these read EINE…QFCH, RYNL…KNCE, and DVKD…SLCE. One can recognise an EGF-like 14; calcium-binding domain in the interval 928–964; that stretch reads EINECSSEPCKNNGTCVDLTNRFFCNCEPEYHGPFCE. The 37-residue stretch at 966 to 1002 folds into the EGF-like 15 domain; it reads DVNKCKISPCLDEENCVYRTDGYNCLCAPGYTGINCE. In terms of domain architecture, EGF-like 16; calcium-binding spans 1004-1040; that stretch reads NLDECLSEPCLHDGVCIDGINHYTCDCKSGFFGTHCE. EGF-like domains are found at residues 1042–1077, 1079–1115, and 1117–1159; these read NAND…TQCK, KIND…AYCE, and SIDN…QFCE. The EGF-like 20; calcium-binding domain maps to 1161-1197; sequence NINECSSSPCLHGADCEDHINGYVCKCQPGWSGHHCE. One can recognise a Laminin G-like 1 domain in the interval 1883–2063; the sequence is FSCVRYYGDS…AVKNYHINNC (181 aa). In terms of domain architecture, EGF-like 21 spans 2099–2140; the sequence is APSVCQQDVCHNGGTCHAIFLSSGIVSFQCDCPLHFTGRFCE. A Laminin G-like 2 domain is found at 2145 to 2339; the sequence is LFFPSFNGNS…NIENCHVPWC (195 aa). The N-linked (GlcNAc...) asparagine glycan is linked to asparagine 2170. 2 EGF-like domains span residues 2335-2368 and 2371-2408; these read HVPW…YSGK and QFAS…PLCT. Cystine bridges form between cysteine 2339–cysteine 2350, cysteine 2344–cysteine 2359, cysteine 2375–cysteine 2386, cysteine 2380–cysteine 2396, cysteine 2398–cysteine 2407, cysteine 2576–cysteine 2609, cysteine 2614–cysteine 2625, cysteine 2619–cysteine 2634, cysteine 2636–cysteine 2645, cysteine 2652–cysteine 2668, cysteine 2662–cysteine 2677, cysteine 2679–cysteine 2688, cysteine 2868–cysteine 2895, cysteine 2900–cysteine 2911, cysteine 2905–cysteine 2920, cysteine 2922–cysteine 2931, cysteine 2937–cysteine 2948, cysteine 2942–cysteine 2958, and cysteine 2960–cysteine 2969. The 191-residue stretch at 2419-2609 folds into the Laminin G-like 3 domain; it reads SGTDAFGYTS…PNAGRSVGQC (191 aa). EGF-like domains are found at residues 2610–2646 and 2648–2689; these read HASP…SFCT and TVST…IYCE. A Laminin G-like 4 domain is found at 2717 to 2895; that stretch reads DPSFRSNELS…AKGGSNVGDC (179 aa). EGF-like domains follow at residues 2896-2932 and 2933-2970; these read DGTA…NTCN and QSVS…RYCE. In terms of domain architecture, Laminin G-like 5 spans 2975–3165; sequence FSTAKFMGNS…YDGDEQNEVT (191 aa).

Belongs to the EYS family. In terms of tissue distribution, expressed in retina (at protein level). Isoform 1: Detected in retina. Isoform 2: Detected in retina. Isoform 3: Strongly expressed in retina and testis. Isoform 4: Strongly expressed in testis, and weakly expressed in retina.

Its subcellular location is the cell projection. The protein localises to the cilium. It localises to the photoreceptor outer segment. It is found in the cytoplasm. The protein resides in the cytoskeleton. Its subcellular location is the cilium axoneme. The protein localises to the microtubule organizing center. It localises to the centrosome. It is found in the secreted. The protein resides in the extracellular space. Its subcellular location is the extracellular matrix. The protein localises to the interphotoreceptor matrix. In terms of biological role, required to maintain the integrity of photoreceptor cells. Specifically required for normal morphology of the photoreceptor ciliary pocket, and might thus facilitate protein trafficking between the photoreceptor inner and outer segments via the transition zone. The chain is Protein eyes shut homolog (EYS) from Homo sapiens (Human).